We begin with the raw amino-acid sequence, 145 residues long: Photosystem I reaction center subunit VI-1, chloroplastic (145 aa).

The transit peptide at 1 to 50 (MASLATVAAVKPSAAIKGLGGSSLAGAKLSIKPSRLSFKPKSIRANGVVA) directs the protein to the chloroplast. A helical transmembrane segment spans residues 102 to 118 (LLLKFLILGGGSLLTYV).

Belongs to the psaH family.

Its subcellular location is the plastid. The protein localises to the chloroplast thylakoid membrane. In terms of biological role, possible role could be the docking of the LHC I antenna complex to the core complex. The chain is Photosystem I reaction center subunit VI-1, chloroplastic (PSAH1) from Arabidopsis thaliana (Mouse-ear cress).